The primary structure comprises 132 residues: Ribosome-binding factor A (132 aa).

It belongs to the RbfA family. In terms of assembly, monomer. Binds 30S ribosomal subunits, but not 50S ribosomal subunits or 70S ribosomes.

The protein localises to the cytoplasm. Its function is as follows. One of several proteins that assist in the late maturation steps of the functional core of the 30S ribosomal subunit. Associates with free 30S ribosomal subunits (but not with 30S subunits that are part of 70S ribosomes or polysomes). Required for efficient processing of 16S rRNA. May interact with the 5'-terminal helix region of 16S rRNA. The chain is Ribosome-binding factor A from Teredinibacter turnerae (strain ATCC 39867 / T7901).